The following is a 429-amino-acid chain: Glucose-1-phosphate adenylyltransferase (429 aa).

Alpha-D-glucose 1-phosphate contacts are provided by residues Gly162, 177-178 (EK), and Ser209.

The protein belongs to the bacterial/plant glucose-1-phosphate adenylyltransferase family. Homotetramer.

The enzyme catalyses alpha-D-glucose 1-phosphate + ATP + H(+) = ADP-alpha-D-glucose + diphosphate. It functions in the pathway glycan biosynthesis; glycogen biosynthesis. Involved in the biosynthesis of ADP-glucose, a building block required for the elongation reactions to produce glycogen. Catalyzes the reaction between ATP and alpha-D-glucose 1-phosphate (G1P) to produce pyrophosphate and ADP-Glc. In Nostoc punctiforme (strain ATCC 29133 / PCC 73102), this protein is Glucose-1-phosphate adenylyltransferase.